Here is a 114-residue protein sequence, read N- to C-terminus: N(4)-acetylcytidine amidohydrolase (114 aa).

Positions 8-93 (TFFEFLTPLV…ALIQEIYPNI (86 aa)) constitute an ASCH domain. Catalysis depends on K22, which acts as the Proton acceptor. The active-site Nucleophile is the T25. Catalysis depends on E75, which acts as the Proton donor.

The protein belongs to the N(4)-acetylcytidine amidohydrolase family.

The enzyme catalyses N(4)-acetylcytidine + H2O = cytidine + acetate + H(+). It carries out the reaction N(4)-acetyl-2'-deoxycytidine + H2O = 2'-deoxycytidine + acetate + H(+). The catalysed reaction is N(4)-acetylcytosine + H2O = cytosine + acetate + H(+). Catalyzes the hydrolysis of N(4)-acetylcytidine (ac4C). The chain is N(4)-acetylcytidine amidohydrolase from Vibrio cholerae serotype O1 (strain ATCC 39541 / Classical Ogawa 395 / O395).